Here is a 574-residue protein sequence, read N- to C-terminus: Sulfate adenylyltransferase (574 aa).

An N-terminal region spans residues 1–169 (MANTPHGGVL…IEAVNKLNHY (169 aa)). Residues 170 to 394 (DYVALRYTPA…LRESNPPRAS (225 aa)) are catalytic. Residue Gln197 coordinates sulfate. ATP-binding positions include 197–200 (QTRN) and 291–294 (GRDH). Catalysis depends on residues Thr198, Arg199, and Asn200. Arg199 contacts sulfate. A sulfate-binding site is contributed by Ala295. Residue Val333 participates in ATP binding. The allosteric regulation domain; adenylyl-sulfate kinase-like stretch occupies residues 395–574 (QGFTIFLTGY…LESEGYFERL (180 aa)). Residues 434 to 437 (DTVR), Arg451, 477 to 478 (IA), and Arg516 each bind 3'-phosphoadenylyl sulfate.

The protein in the N-terminal section; belongs to the sulfate adenylyltransferase family. It in the C-terminal section; belongs to the APS kinase family. As to quaternary structure, homohexamer. Dimer of trimers.

The protein resides in the cytoplasm. The catalysed reaction is sulfate + ATP + H(+) = adenosine 5'-phosphosulfate + diphosphate. Its pathway is sulfur metabolism; hydrogen sulfide biosynthesis; sulfite from sulfate: step 1/3. Its activity is regulated as follows. Allosterically inhibited by 3'-phosphoadenosine 5'-phosphosulfate (PAPS). Functionally, catalyzes the first intracellular reaction of sulfate assimilation, forming adenosine-5'-phosphosulfate (APS) from inorganic sulfate and ATP. Plays an important role in sulfate activation as a component of the biosynthesis pathway of sulfur-containing amino acids. In Aspergillus niger, this protein is Sulfate adenylyltransferase.